Here is a 697-residue protein sequence, read N- to C-terminus: Sodium-dependent phosphate transport protein 2B (697 aa).

The interval 1–45 (MAPWPELENAQPNPGKFIEGASGPQSSIPAKDKEASKTNDNGTPV) is disordered. Residues 1–91 (MAPWPELENA…WSERDTKGKT (91 aa)) lie on the Cytoplasmic side of the membrane. The helical transmembrane segment at 92–112 (LCIFQGVGKFILLLGFLYLFV) threads the bilayer. The Extracellular portion of the chain corresponds to 113-136 (CSLDVLSSAFQLVGGKVAGQFFSN). The chain crosses the membrane as a helical span at residues 137–157 (NSIMSNPVAGLVIGVLVTVMV). The Cytoplasmic segment spans residues 158–213 (QSSSTSSSIIVSMVASSLLTVRAAIPIIMGANIGTSITNTIVALMQAGDRNEFRRA). Residues 214 to 234 (FAGATVHDFFNWLSVFVLLPL) form a helical membrane-spanning segment. At 235–363 (EAATHYLEIL…FVNFSLPDLA (129 aa)) the chain is on the extracellular side. N-linked (GlcNAc...) asparagine glycosylation is found at Asn-295, Asn-308, Asn-321, and Asn-356. A disulfide bond links Cys-303 and Cys-350. Residues 364-384 (VGIILLTVSLVVLCGCLIMIV) form a helical membrane-spanning segment. The Cytoplasmic portion of the chain corresponds to 385–408 (KLLGSVLRGQVATVIKKTLNTDFP). The helical transmembrane segment at 409 to 429 (FPFAWLTGYLAILVGAGMTFI) threads the bilayer. Over 430–486 (VQSSSVFTSAMTPLIGIGVISIERAYPLTLGSNIGTTTTAILAALASPGNTLRSSLQ) the chain is Extracellular. A helical membrane pass occupies residues 487–507 (IALCHFFFNISGILLWYPIPF). At 508-526 (TRLPIRLAKGLGNISAKYR) the chain is on the cytoplasmic side. Residues 527 to 547 (WFAVFYLIFFFFVTPLTVFGL) form a helical membrane-spanning segment. At 548 to 551 (SLAG) the chain is on the extracellular side. Residues 552–572 (WPVLVGVGVPIILLLLLVLCL) form a helical membrane-spanning segment. The Cytoplasmic segment spans residues 573-696 (RMLQFRCPRI…SMKALSNTTV (124 aa)).

This sequence belongs to the SLC34A transporter family. In terms of tissue distribution, highly abundant in the ileum of small intestine, whereas it is almost absent in the duodenum and in the jejunum.

It localises to the apical cell membrane. It catalyses the reaction 3 Na(+)(out) + phosphate(out) = 3 Na(+)(in) + phosphate(in). Functionally, involved in actively transporting phosphate into cells via Na(+) cotransport. The sequence is that of Sodium-dependent phosphate transport protein 2B (Slc34a2) from Mus musculus (Mouse).